The primary structure comprises 481 residues: Proline--tRNA ligase (481 aa).

This sequence belongs to the class-II aminoacyl-tRNA synthetase family. ProS type 3 subfamily. As to quaternary structure, homodimer.

Its subcellular location is the cytoplasm. It catalyses the reaction tRNA(Pro) + L-proline + ATP = L-prolyl-tRNA(Pro) + AMP + diphosphate. Functionally, catalyzes the attachment of proline to tRNA(Pro) in a two-step reaction: proline is first activated by ATP to form Pro-AMP and then transferred to the acceptor end of tRNA(Pro). The polypeptide is Proline--tRNA ligase (Thermococcus kodakarensis (strain ATCC BAA-918 / JCM 12380 / KOD1) (Pyrococcus kodakaraensis (strain KOD1))).